We begin with the raw amino-acid sequence, 528 residues long: MSDPKVTTQRNPSIVILDFGSQYSELIARRIRETEVYSMVLGYNSSVEELKKLSPQGIILSGGPSSVYEEKAPLCDPSIWDLDIPILGVCYGMQVMVKQLGGLVGEAIGKAEYGKALLQVDDPTALLTNVENGSTMWMSHGDSVKQLPAGFVRLAHTTNTPDAAIACHDRRFYGVQFHPEVVHSTDGMVIIRNFVHNICRSKPDWTTNTFIDEAINDVQEKVGKKRVLLALSGGVDSSTLAFLLKKAIGNQLTCMFIDQGFMRKGEPEFLMEFFDKKFHINVEYINARDRFLDKLQGVSDPEKKRKIIGTEFIRVFEEESLRLGPFDYLAQGTLYPDVIESSGTNIDPKTGERIAVKIKSHHNVGGLPKDLQFKLVEPLRTLFKDEVRKVGRSLGLPEEIVNRHPFPGPGLAIRILGEVTKEKLNCLRDADLIVREEIADAGLYHQIWQAFAVLLPVRSVGVMGDQRTYAWPIVLRCVSSEDGMTADWSRLPNSLLEKISNRIVNEVNGVNRVVLDITSKPPGTIEWE.

Residues 13-204 (SIVILDFGSQ…VHNICRSKPD (192 aa)) enclose the Glutamine amidotransferase type-1 domain. Catalysis depends on cysteine 90, which acts as the Nucleophile. Catalysis depends on residues histidine 178 and glutamate 180. The 199-residue stretch at 205-403 (WTTNTFIDEA…LGLPEEIVNR (199 aa)) folds into the GMPS ATP-PPase domain. 232–238 (SGGVDSS) provides a ligand contact to ATP.

As to quaternary structure, homodimer.

The catalysed reaction is XMP + L-glutamine + ATP + H2O = GMP + L-glutamate + AMP + diphosphate + 2 H(+). It functions in the pathway purine metabolism; GMP biosynthesis; GMP from XMP (L-Gln route): step 1/1. Its function is as follows. Catalyzes the synthesis of GMP from XMP. In Prochlorococcus marinus (strain SARG / CCMP1375 / SS120), this protein is GMP synthase [glutamine-hydrolyzing].